Reading from the N-terminus, the 126-residue chain is Large ribosomal subunit protein bL12 (126 aa).

A compositionally biased stretch (basic and acidic residues) spans A104–L116. A disordered region spans residues A104–K126. The span at E117–K126 shows a compositional bias: low complexity.

This sequence belongs to the bacterial ribosomal protein bL12 family. Homodimer. Part of the ribosomal stalk of the 50S ribosomal subunit. Forms a multimeric L10(L12)X complex, where L10 forms an elongated spine to which 2 to 4 L12 dimers bind in a sequential fashion. Binds GTP-bound translation factors.

Forms part of the ribosomal stalk which helps the ribosome interact with GTP-bound translation factors. Is thus essential for accurate translation. In Bifidobacterium animalis subsp. lactis (strain AD011), this protein is Large ribosomal subunit protein bL12.